The following is a 38-amino-acid chain: MKVRASVKKMCRGCKIIRRNGAVMVICSTEPRHKQKQG.

The protein belongs to the bacterial ribosomal protein bL36 family.

This Hahella chejuensis (strain KCTC 2396) protein is Large ribosomal subunit protein bL36.